Reading from the N-terminus, the 290-residue chain is 2-phosphoglycerate kinase (290 aa).

Residues 1 to 89 form the ATP-cone domain; the sequence is MIIVTDSERK…FWRELRRRKV (89 aa).

The protein belongs to the 2-phosphoglycerate kinase family. A divalent metal cation is required as a cofactor.

The catalysed reaction is (2R)-2-phosphoglycerate + ATP = (2R)-2,3-bisphosphoglycerate + ADP + H(+). The protein operates within thermoadapter biosynthesis; cyclic 2,3-diphosphoglycerate biosynthesis; cyclic 2,3-diphosphoglycerate from 2-phospho-D-glycerate: step 1/2. In terms of biological role, catalyzes the phosphorylation of 2-phosphoglycerate to 2,3-diphosphoglycerate. Involved in the biosynthesis of cyclic 2,3-bisphosphoglycerate, a thermoprotectant. The protein is 2-phosphoglycerate kinase of Thermococcus kodakarensis (strain ATCC BAA-918 / JCM 12380 / KOD1) (Pyrococcus kodakaraensis (strain KOD1)).